Reading from the N-terminus, the 139-residue chain is D-ribose pyranase (139 aa).

The active-site Proton donor is histidine 20. Substrate-binding positions include aspartate 28, histidine 106, and 128–130; that span reads YAN.

Belongs to the RbsD / FucU family. RbsD subfamily. Homodecamer.

It localises to the cytoplasm. It carries out the reaction beta-D-ribopyranose = beta-D-ribofuranose. It participates in carbohydrate metabolism; D-ribose degradation; D-ribose 5-phosphate from beta-D-ribopyranose: step 1/2. In terms of biological role, catalyzes the interconversion of beta-pyran and beta-furan forms of D-ribose. The sequence is that of D-ribose pyranase from Aliivibrio fischeri (strain MJ11) (Vibrio fischeri).